Consider the following 257-residue polypeptide: Snake venom serine protease KN3 (257 aa).

An N-terminal signal peptide occupies residues 1 to 18 (MVLIRVLANLLILQLSYA). The propeptide occupies 19–24 (QKSSKL). The region spanning 25–248 (VVGGDECNIN…HLDWIKSIIA (224 aa)) is the Peptidase S1 domain. 6 disulfides stabilise this stretch: Cys31–Cys162, Cys49–Cys65, Cys97–Cys255, Cys141–Cys209, Cys173–Cys188, and Cys199–Cys224. Catalysis depends on charge relay system residues His64 and Asp109. Asn120, Asn121, and Asn164 each carry an N-linked (GlcNAc...) asparagine glycan. Ser203 (charge relay system) is an active-site residue.

The protein belongs to the peptidase S1 family. Snake venom subfamily. Monomer. In terms of tissue distribution, expressed by the venom gland.

It is found in the secreted. Functionally, snake venom serine protease that may act in the hemostasis system of the prey. This is Snake venom serine protease KN3 from Trimeresurus stejnegeri (Chinese green tree viper).